The sequence spans 559 residues: Dihydroxy-acid dehydratase (559 aa).

Cys-52 is a [2Fe-2S] cluster binding site. Asp-84 is a Mg(2+) binding site. Cys-125 contributes to the [2Fe-2S] cluster binding site. Mg(2+)-binding residues include Asp-126 and Lys-127. Position 127 is an N6-carboxylysine (Lys-127). Cys-197 provides a ligand contact to [2Fe-2S] cluster. Glu-447 serves as a coordination point for Mg(2+). Ser-473 functions as the Proton acceptor in the catalytic mechanism.

It belongs to the IlvD/Edd family. As to quaternary structure, homodimer. [2Fe-2S] cluster serves as cofactor. Mg(2+) is required as a cofactor.

It catalyses the reaction (2R)-2,3-dihydroxy-3-methylbutanoate = 3-methyl-2-oxobutanoate + H2O. It carries out the reaction (2R,3R)-2,3-dihydroxy-3-methylpentanoate = (S)-3-methyl-2-oxopentanoate + H2O. Its pathway is amino-acid biosynthesis; L-isoleucine biosynthesis; L-isoleucine from 2-oxobutanoate: step 3/4. The protein operates within amino-acid biosynthesis; L-valine biosynthesis; L-valine from pyruvate: step 3/4. In terms of biological role, functions in the biosynthesis of branched-chain amino acids. Catalyzes the dehydration of (2R,3R)-2,3-dihydroxy-3-methylpentanoate (2,3-dihydroxy-3-methylvalerate) into 2-oxo-3-methylpentanoate (2-oxo-3-methylvalerate) and of (2R)-2,3-dihydroxy-3-methylbutanoate (2,3-dihydroxyisovalerate) into 2-oxo-3-methylbutanoate (2-oxoisovalerate), the penultimate precursor to L-isoleucine and L-valine, respectively. This is Dihydroxy-acid dehydratase from Roseiflexus castenholzii (strain DSM 13941 / HLO8).